Consider the following 592-residue polypeptide: A-type ATP synthase subunit A (592 aa).

Position 233 to 240 (233 to 240 (GPFGSGKT)) interacts with ATP.

Belongs to the ATPase alpha/beta chains family. In terms of assembly, has multiple subunits with at least A(3), B(3), C, D, E, F, H, I and proteolipid K(x).

It localises to the cell membrane. It carries out the reaction ATP + H2O + 4 H(+)(in) = ADP + phosphate + 5 H(+)(out). Functionally, component of the A-type ATP synthase that produces ATP from ADP in the presence of a proton gradient across the membrane. The A chain is the catalytic subunit. This is A-type ATP synthase subunit A from Saccharolobus islandicus (strain L.S.2.15 / Lassen #1) (Sulfolobus islandicus).